We begin with the raw amino-acid sequence, 699 residues long: MADAGIRRVVPSDLYPLVLGFLRDNQLSEVANKFAKATGATQQDANASSLLDIYSFWLKSAKVPERKLQANGPVAKKAKKKASSSDSEDSSEEEEEVQGPPAKKAAVPAKRVGLPPGKAAAKASESSSSEESSDDDDEEDQKKQPVQKGVKPQAKAAKAPPKKAKSSDSDSDSSSEDEPPKNQKPKITPVTVKAQTKAPPKPARAAPKIANGKAASSSSSSSSSSSSDDSEEEKAAATPKKTVPKKQVVAKAPVKAATTPTRKSSSSEDSSSDEEEEQKKPMKNKPGPYSSVPPPSAPPPKKSLGTQPPKKAVEKQQPVESSEDSSDESDSSSEEEKKPPTKAVVSKATTKPPPAKKAAESSSDSSDSDSSEDDEAPSKPAGTTKNSSNKPAVTTKSPAVKPAAAPKQPVGGGQKLLTRKADSSSSEEESSSSEEEKTKKMVATTKPKATAKAALSLPAKQAPQGSRDSSSDSDSSSSEEEEEKTSKSAVKKKPQKVAGGAAPSKPASAKKGKAESSNSSSSDDSSEEEEEKLKGKGSPRPQAPKANGTSALTAQNGKAAKNSEEEEEEKKKAAVVVSKSGSLKKRKQNEAAKEAETPQAKKIKLQTPNTFPKRKKGEKRASSPFRRVREEEIEVDSRVADNSFDAKRGAAGDWGERANQVLKFTKGKSFRHEKTKKKRGSYRGGSISVQVNSIKFDSE.

Residues Val10 to Gln42 enclose the LisH domain. The residue at position 33 (Lys33) is an N6-acetyllysine. The interval Glu65 to Ser637 is disordered. Glycyl lysine isopeptide (Lys-Gly) (interchain with G-Cter in SUMO2) cross-links involve residues Lys67 and Lys76. One copy of the Acidic serine cluster 1 repeat lies at Ser84–Glu95. The 11 X 12 AA approximate repeats of an acidic serine cluster stretch occupies residues Ser84 to Glu566. Acidic residues predominate over residues Asp86–Val97. Phosphoserine occurs at positions 87, 90, and 91. At Ser91 the chain carries Diphosphoserine. A compositionally biased stretch (low complexity) spans Pro100–Lys110. An Acidic serine cluster 2 repeat occupies Glu125–Asp136. The span at Gln144–Ala159 shows a compositional bias: low complexity. One copy of the Acidic serine cluster 3 repeat lies at Ser167–Glu178. Lys186 is covalently cross-linked (Glycyl lysine isopeptide (Lys-Gly) (interchain with G-Cter in SUMO2)). Thr188 bears the Phosphothreonine mark. Lys193 is covalently cross-linked (Glycyl lysine isopeptide (Lys-Gly) (interchain with G-Cter in SUMO2)). Low complexity-rich tracts occupy residues Lys193 to Ser227 and Ala236 to Thr261. The segment at Arg204–Gly382 is interaction with RPA194. An Acidic serine cluster 4 repeat occupies Ser221–Glu232. One copy of the Acidic serine cluster 5 repeat lies at Ser264 to Glu275. Residues Ser291–Lys301 show a composition bias toward pro residues. A compositionally biased stretch (acidic residues) spans Ser321–Ser333. The Acidic serine cluster 6 repeat unit spans residues Ser325–Glu336. Glycyl lysine isopeptide (Lys-Gly) (interchain with G-Cter in SUMO2) cross-links involve residues Lys342 and Lys347. Phosphoserine occurs at positions 362, 363, and 366. The Acidic serine cluster 7 repeat unit spans residues Ser363 to Glu375. The segment covering Ser366 to Glu375 has biased composition (acidic residues). A compositionally biased stretch (polar residues) spans Ala381–Ser397. Glycyl lysine isopeptide (Lys-Gly) (interchain with G-Cter in SUMO2) cross-links involve residues Lys390 and Lys396. Ser397 is subject to Phosphoserine. Residues Pro398–Pro409 are compositionally biased toward low complexity. Glycyl lysine isopeptide (Lys-Gly) (interchain with G-Cter in SUMO2) cross-links involve residues Lys401 and Lys407. An N6-acetyllysine; alternate modification is found at Lys415. Lys415 is covalently cross-linked (Glycyl lysine isopeptide (Lys-Gly) (interchain with G-Cter in SUMO1); alternate). Lys415 is covalently cross-linked (Glycyl lysine isopeptide (Lys-Gly) (interchain with G-Cter in SUMO2); alternate). Residues Ser425 to Glu436 form an Acidic serine cluster 8 repeat. Residues Lys440 and Lys452 each participate in a glycyl lysine isopeptide (Lys-Gly) (interchain with G-Cter in SUMO2) cross-link. 2 stretches are compositionally biased toward low complexity: residues Met441–Ser476 and Ala498–Asp523. Ser456 carries the post-translational modification Phosphoserine. The stretch at Ser470–Glu481 is one Acidic serine cluster 9 repeat. Lys505 is covalently cross-linked (Glycyl lysine isopeptide (Lys-Gly) (interchain with G-Cter in SUMO2)). Ser508 carries the post-translational modification Phosphoserine. The stretch at Ser519–Glu529 is one Acidic serine cluster 10 repeat. Ser538 carries the phosphoserine modification. The span at Asn547–Asn556 shows a compositional bias: polar residues. One copy of the Acidic serine cluster 11 repeat lies at Gln555–Glu566. The residue at position 563 (Ser563) is a Phosphoserine. Lys572 is covalently cross-linked (Glycyl lysine isopeptide (Lys-Gly) (interchain with G-Cter in SUMO1)). A Glycyl lysine isopeptide (Lys-Gly) (interchain with G-Cter in SUMO2) cross-link involves residue Lys579. A phosphoserine mark is found at Ser580 and Ser582. Residue Lys604 forms a Glycyl lysine isopeptide (Lys-Gly) (interchain with G-Cter in SUMO2) linkage. Residues Thr607 and Thr610 each carry the phosphothreonine modification. Lys613 is covalently cross-linked (Glycyl lysine isopeptide (Lys-Gly) (interchain with G-Cter in SUMO2)). Ser622 carries the phosphoserine modification. A compositionally biased stretch (basic and acidic residues) spans Arg627–Ser637. Ser643 carries the post-translational modification Phosphoserine. Lys647 participates in a covalent cross-link: Glycyl lysine isopeptide (Lys-Gly) (interchain with G-Cter in SUMO2). Residue Lys663 is modified to N6-acetyllysine; alternate. A Glycyl lysine isopeptide (Lys-Gly) (interchain with G-Cter in SUMO2); alternate cross-link involves residue Lys663. Arg683 carries the omega-N-methylarginine modification. Ser686 carries the phosphoserine modification. Residue Lys695 forms a Glycyl lysine isopeptide (Lys-Gly) (interchain with G-Cter in SUMO2) linkage. At Ser698 the chain carries Phosphoserine.

The protein belongs to the NOLC1 family. Heterodimer; heterodimerizes with TCOF1 following monoubiquitination. Interacts with RNA polymerase I 194 kDa subunit (RPA194) and with casein kinase-II. Interacts with DKC1/NAP57, NOP58 and fibrillarin. Undergoes rapid and massive phosphorylation/dephosphorylation cycles on CK2 and PKC sites. NOLC1 is one of the mostly phosphorylated proteins in the cell. In terms of processing, ubiquitinated. Monoubiquitination by the BCR(KBTBD8) complex promotes the formation of a NOLC1-TCOF1 complex that acts as a platform to connect RNA polymerase I with enzymes responsible for ribosomal processing and modification, leading to remodel the translational program of differentiating cells in favor of neural crest specification. Post-translationally, pyrophosphorylated by 5-diphosphoinositol pentakisphosphate (5-IP7). Serine pyrophosphorylation is achieved by Mg(2+)-dependent, but enzyme independent transfer of a beta-phosphate from a inositol pyrophosphate to a pre-phosphorylated serine residue.

It is found in the nucleus. The protein localises to the nucleolus. Its subcellular location is the cytoplasm. Functionally, nucleolar protein that acts as a regulator of RNA polymerase I by connecting RNA polymerase I with enzymes responsible for ribosomal processing and modification. Required for neural crest specification: following monoubiquitination by the BCR(KBTBD8) complex, associates with TCOF1 and acts as a platform to connect RNA polymerase I with enzymes responsible for ribosomal processing and modification, leading to remodel the translational program of differentiating cells in favor of neural crest specification. Involved in nucleologenesis, possibly by playing a role in the maintenance of the fundamental structure of the fibrillar center and dense fibrillar component in the nucleolus. It has intrinsic GTPase and ATPase activities. The protein is Nucleolar and coiled-body phosphoprotein 1 of Homo sapiens (Human).